A 238-amino-acid polypeptide reads, in one-letter code: LexA repressor (238 aa).

Residues 26 to 46 (FDEMKDALELRSKSGIHRLIS) constitute a DNA-binding region (H-T-H motif). Catalysis depends on for autocatalytic cleavage activity residues S159 and K197.

The protein belongs to the peptidase S24 family. As to quaternary structure, homodimer.

The enzyme catalyses Hydrolysis of Ala-|-Gly bond in repressor LexA.. Represses a number of genes involved in the response to DNA damage (SOS response), including recA and lexA. In the presence of single-stranded DNA, RecA interacts with LexA causing an autocatalytic cleavage which disrupts the DNA-binding part of LexA, leading to derepression of the SOS regulon and eventually DNA repair. The protein is LexA repressor of Gluconobacter oxydans (strain 621H) (Gluconobacter suboxydans).